Here is a 345-residue protein sequence, read N- to C-terminus: Mitochondrial substrate carrier family protein J (345 aa).

The Mitochondrial intermembrane segment spans residues 1–31; it reads MSSSHTIQETKEVHTKTNKRIQWDDLDPKRY. Solcar repeat units lie at residues 30–118, 129–217, and 255–342; these read RYYF…VKQG, DLLF…SKSK, and EDPI…VKKL. The helical transmembrane segment at 32–52 threads the bilayer; that stretch reads YFYNFLLGGSIDLLMFPLDVI. Over 53-88 the chain is Mitochondrial matrix; sequence RTRLQVQGSQNVIQSFPQYNGTFDGFKKLIRLEGKR. Residues 89–110 form a helical membrane-spanning segment; sequence ALYKGFLTSECGYLCSRAIYFG. The Mitochondrial intermembrane portion of the chain corresponds to 111–129; the sequence is SYEFVKQGFLKGRSDSDSD. Residues 130 to 150 traverse the membrane as a helical segment; it reads LLFVTTISGAISEALASVIWV. The Mitochondrial matrix segment spans residues 151-191; it reads PFDVATQSVQIQGSLSKPKYKGGSDVFKKIYGERGIKGLYK. The helical transmembrane segment at 192 to 208 threads the bilayer; the sequence is GFGATIIRNVPYSGIWW. At 209–257 the chain is on the mitochondrial intermembrane side; that stretch reads GTYEISKSKLTQFNIRQKLGLKERSSHSLAVSAEIDKNNPSHEVENEDP. The chain crosses the membrane as a helical span at residues 258–278; sequence IIHFISGFFAAVFATSITNPL. Residues 279–316 are Mitochondrial matrix-facing; sequence DVAKTRLQTGVFPENEKPNFYTIIKSTIRKEGIRALWK. A helical membrane pass occupies residues 317–337; sequence GLVPSLLTSTPYSMISIFLYE. Topologically, residues 338-345 are mitochondrial intermembrane; sequence EVKKLSLK.

It belongs to the mitochondrial carrier (TC 2.A.29) family.

The protein resides in the mitochondrion inner membrane. Functionally, mitochondrial solute carriers shuttle metabolites, nucleotides, and cofactors through the mitochondrial inner membrane. In Dictyostelium discoideum (Social amoeba), this protein is Mitochondrial substrate carrier family protein J (mcfJ).